Reading from the N-terminus, the 267-residue chain is Phosphate import ATP-binding protein PstB (267 aa).

An ABC transporter domain is found at 21-262 (VAARNLDFYY…PSKQQTEDYI (242 aa)). Residue 53 to 60 (GPSGCGKS) participates in ATP binding.

Belongs to the ABC transporter superfamily. Phosphate importer (TC 3.A.1.7) family. As to quaternary structure, the complex is composed of two ATP-binding proteins (PstB), two transmembrane proteins (PstC and PstA) and a solute-binding protein (PstS).

The protein resides in the cell inner membrane. It catalyses the reaction phosphate(out) + ATP + H2O = ADP + 2 phosphate(in) + H(+). Functionally, part of the ABC transporter complex PstSACB involved in phosphate import. Responsible for energy coupling to the transport system. This is Phosphate import ATP-binding protein PstB from Xanthomonas euvesicatoria pv. vesicatoria (strain 85-10) (Xanthomonas campestris pv. vesicatoria).